The following is a 196-amino-acid chain: Adenosylcobinamide-phosphate guanylyltransferase (196 aa).

As to quaternary structure, homodimer.

It catalyses the reaction adenosylcob(III)inamide phosphate + GTP + H(+) = adenosylcob(III)inamide-GDP + diphosphate. The protein operates within cofactor biosynthesis; adenosylcobalamin biosynthesis. Functionally, guanylyltransferase that catalyzes the synthesis of adenosylcobinamide-GDP (AdoCbi-GDP) from adenosylcobinamide-phosphate (AdoCbi-P) and GTP. Is involved in adenosylcobalamin biosynthesis. Binds one GTP per dimer. Cannot use other NTPs or GDP. Does not display AdoCbi kinase activity. Is also able to catalyze the condensation of 2-phospho-L-lactate (LP) with GTP in vitro to form PPi and (2S)-lactyl-2-diphospho-5'-guanosine (LPPG), but is much less efficient than CofC, the presumed enzyme catalyzing this reaction in vivo. This chain is Adenosylcobinamide-phosphate guanylyltransferase (cobY), found in Methanocaldococcus jannaschii (strain ATCC 43067 / DSM 2661 / JAL-1 / JCM 10045 / NBRC 100440) (Methanococcus jannaschii).